Reading from the N-terminus, the 291-residue chain is 5'-3' exonuclease (291 aa).

In terms of domain architecture, 5'-3' exonuclease spans 176 to 269; sequence APYQVVEYKG…DLTGLKPIQK (94 aa).

In terms of biological role, 5'-3' exonuclease acting preferentially on double-stranded DNA. This Mycoplasma genitalium (strain ATCC 33530 / DSM 19775 / NCTC 10195 / G37) (Mycoplasmoides genitalium) protein is 5'-3' exonuclease (polA).